The chain runs to 340 residues: Speriolin-like protein (340 aa).

Disordered stretches follow at residues 42-73 (GGGHDLLPPRAHAYPEAGSPGSGVPDFGRFTS) and 94-135 (APLS…KLSP). At S60 the chain carries Phosphoserine. The segment covering 123 to 133 (PHSHRGTDRKL) has biased composition (basic and acidic residues). The residue at position 134 (S134) is a Phosphoserine.

Belongs to the speriolin family.

The protein localises to the cytoplasm. In Homo sapiens (Human), this protein is Speriolin-like protein (SPATC1L).